The following is a 66-amino-acid chain: Cold shock protein 1 (66 aa).

In terms of domain architecture, CSD spans 4-63 (GTVKWFNADKGYGFITGEDGNDVFVHFSAIQTDGFKTLEEGQKVTFDEESSDRGPQAANV). Residues 47–66 (VTFDEESSDRGPQAANVVPQ) are disordered.

It is found in the cytoplasm. This Lactiplantibacillus plantarum (strain ATCC BAA-793 / NCIMB 8826 / WCFS1) (Lactobacillus plantarum) protein is Cold shock protein 1 (csp).